A 285-amino-acid polypeptide reads, in one-letter code: MFNWVKTAMLMAAITALFIVIGGMIGGSRGMTIALLIALGMNFFSYWFSDKMVLRMYNAQEVDETTAPQFYRMVRELATRANLPMPRVYLIDESQPNAFATGRNPEHAAVAATTGILRVLSEREMRGVMAHELAHVKHRDILISTISATMAGAISALANFAMFFGGRDENGRPANPIAGIAVALLAPIAGALIQMAISRAREFEADRGGAQISGDPQALASALDKIHRYASGIPFQTAEEHPATAQMMIMNPLSGGGLQNLFSTHPATEERIARLMEMARTGRFD.

Helical transmembrane passes span 7-27 (TAMLMAAITALFIVIGGMIGG) and 30-50 (GMTIALLIALGMNFFSYWFSD). His-131 contacts Zn(2+). The active site involves Glu-132. A Zn(2+)-binding site is contributed by His-135. The next 2 helical transmembrane spans lie at 146 to 166 (ISATMAGAISALANFAMFFGG) and 177 to 197 (IAGIAVALLAPIAGALIQMAI). Zn(2+) is bound at residue Glu-202.

Belongs to the peptidase M48B family. The cofactor is Zn(2+).

Its subcellular location is the cell inner membrane. The sequence is that of Protease HtpX homolog from Burkholderia thailandensis (strain ATCC 700388 / DSM 13276 / CCUG 48851 / CIP 106301 / E264).